Reading from the N-terminus, the 161-residue chain is Nucleotide-binding protein Gbem_0619 (161 aa).

The protein belongs to the YajQ family.

Functionally, nucleotide-binding protein. The chain is Nucleotide-binding protein Gbem_0619 from Citrifermentans bemidjiense (strain ATCC BAA-1014 / DSM 16622 / JCM 12645 / Bem) (Geobacter bemidjiensis).